The sequence spans 604 residues: Rhotekin-2 (604 aa).

The REM-1 domain occupies methionine 1–asparagine 74. The stretch at valine 53–arginine 79 forms a coiled coil. The PH domain maps to alanine 281–phenylalanine 387. The tract at residues leucine 481–isoleucine 590 is disordered. Positions glycine 514–glycine 527 are enriched in polar residues. A compositionally biased stretch (low complexity) spans serine 529–proline 543.

Functionally, may play an important role in lymphopoiesis. The chain is Rhotekin-2 (Rtkn2) from Mus musculus (Mouse).